The following is a 973-amino-acid chain: UvrABC system protein A (973 aa).

Gly34–Ser41 is an ATP binding site. ABC transporter domains lie at Trp331–Leu609 and Pro629–Lys958. Gly662 to Ser669 is a binding site for ATP. The segment at Cys761 to Cys787 adopts a C4-type zinc-finger fold.

Belongs to the ABC transporter superfamily. UvrA family. As to quaternary structure, forms a heterotetramer with UvrB during the search for lesions.

It localises to the cytoplasm. The UvrABC repair system catalyzes the recognition and processing of DNA lesions. UvrA is an ATPase and a DNA-binding protein. A damage recognition complex composed of 2 UvrA and 2 UvrB subunits scans DNA for abnormalities. When the presence of a lesion has been verified by UvrB, the UvrA molecules dissociate. The chain is UvrABC system protein A from Agrobacterium fabrum (strain C58 / ATCC 33970) (Agrobacterium tumefaciens (strain C58)).